The following is a 215-amino-acid chain: Small ribosomal subunit protein uS3 (215 aa).

The KH type-2 domain occupies 39 to 107 (VRQYLQKRLA…PVHINIEEIR (69 aa)).

Belongs to the universal ribosomal protein uS3 family. In terms of assembly, part of the 30S ribosomal subunit. Forms a tight complex with proteins S10 and S14.

Binds the lower part of the 30S subunit head. Binds mRNA in the 70S ribosome, positioning it for translation. The chain is Small ribosomal subunit protein uS3 from Nitrosomonas eutropha (strain DSM 101675 / C91 / Nm57).